A 618-amino-acid chain; its full sequence is DNA mismatch repair protein MutL (618 aa).

It belongs to the DNA mismatch repair MutL/HexB family.

Functionally, this protein is involved in the repair of mismatches in DNA. It is required for dam-dependent methyl-directed DNA mismatch repair. May act as a 'molecular matchmaker', a protein that promotes the formation of a stable complex between two or more DNA-binding proteins in an ATP-dependent manner without itself being part of a final effector complex. In Bradyrhizobium sp. (strain BTAi1 / ATCC BAA-1182), this protein is DNA mismatch repair protein MutL.